The primary structure comprises 415 residues: Polyadenylate-binding protein RBP45C (415 aa).

Residues Met-1 to Gly-77 are disordered. Low complexity predominate over residues Gln-23–Gln-64. RRM domains are found at residues Arg-80–Leu-160, His-173–Asn-252, and Thr-278–Ser-350. Residues Arg-344 to Thr-356 show a composition bias toward polar residues. A disordered region spans residues Arg-344 to Tyr-369.

It belongs to the polyadenylate-binding RBP45 family. In terms of assembly, interacts with the poly(A) tail of mRNA in nucleus. Mostly expressed in seedlings and stems, and, to a lower extent, in leaves and flowers.

The protein resides in the nucleus. Functionally, heterogeneous nuclear ribonucleoprotein (hnRNP)-protein binding the poly(A) tail of mRNA and probably involved in some steps of pre-mRNA maturation. The sequence is that of Polyadenylate-binding protein RBP45C (RBP45C) from Arabidopsis thaliana (Mouse-ear cress).